The sequence spans 335 residues: DNA-directed RNA polymerase subunit alpha (335 aa).

The tract at residues 1–233 is alpha N-terminal domain (alpha-NTD); that stretch reads MIRDKISVSI…DLFIPFLHGE (233 aa). An alpha C-terminal domain (alpha-CTD) region spans residues 264 to 335; it reads KEKIAFKHIF…KRFAIDPPRN (72 aa).

The protein belongs to the RNA polymerase alpha chain family. In plastids the minimal PEP RNA polymerase catalytic core is composed of four subunits: alpha, beta, beta', and beta''. When a (nuclear-encoded) sigma factor is associated with the core the holoenzyme is formed, which can initiate transcription.

Its subcellular location is the plastid. It is found in the chloroplast. It catalyses the reaction RNA(n) + a ribonucleoside 5'-triphosphate = RNA(n+1) + diphosphate. Its function is as follows. DNA-dependent RNA polymerase catalyzes the transcription of DNA into RNA using the four ribonucleoside triphosphates as substrates. The protein is DNA-directed RNA polymerase subunit alpha of Pinus koraiensis (Korean pine).